Here is a 156-residue protein sequence, read N- to C-terminus: Small ribosomal subunit protein uS7 (156 aa).

The protein belongs to the universal ribosomal protein uS7 family. As to quaternary structure, part of the 30S ribosomal subunit. Contacts proteins S9 and S11.

Its function is as follows. One of the primary rRNA binding proteins, it binds directly to 16S rRNA where it nucleates assembly of the head domain of the 30S subunit. Is located at the subunit interface close to the decoding center, probably blocks exit of the E-site tRNA. In Clostridium botulinum (strain Kyoto / Type A2), this protein is Small ribosomal subunit protein uS7.